We begin with the raw amino-acid sequence, 136 residues long: Beta-hordothionin (136 aa).

Positions 1 to 27 (MGSKGLKGVMVCLLILGLVLEHVQVEG) are cleaved as a signal peptide. 4 disulfide bridges follow: cysteine 30–cysteine 66, cysteine 31–cysteine 58, cysteine 39–cysteine 56, and cysteine 43–cysteine 52. Positions 73-136 (LALVSNSDEP…GDVGLTSLTA (64 aa)) are cleaved as a propeptide — acidic domain.

It belongs to the plant thionin (TC 1.C.44) family. 4 C-C subfamily. As to quaternary structure, homodimer.

The protein localises to the secreted. In terms of biological role, thionins are small plant proteins which are toxic to animal cells. They seem to exert their toxic effect at the level of the cell membrane. Their precise function is not known. This Hordeum vulgare (Barley) protein is Beta-hordothionin (THI1.2).